A 117-amino-acid polypeptide reads, in one-letter code: Appetite-regulating hormone (117 aa).

The signal sequence occupies residues 1-23 (MPSPGTVCSLLLFSMLWADLAMA). Residue serine 26 is the site of O-decanoyl serine; alternate attachment. Serine 26 carries O-hexanoyl serine; alternate lipidation. A lipid anchor (O-octanoyl serine; alternate) is attached at serine 26. The interval 29-52 (SPEHQKVQQRKESKKPPAKLQPRA) is disordered. The span at 31 to 43 (EHQKVQQRKESKK) shows a compositional bias: basic and acidic residues. A propeptide spans 52 to 75 (ALEGLIHPEDTSQVEGAEDELEIR) (removed in mature form). Position 98 is a leucine amide (leucine 98). A propeptide spans 99-117 (GKFLQDVLWEEADEVLADE) (removed in mature form).

It belongs to the motilin family. Post-translationally, O-octanoylated by GOAT/MBOAT4. O-octanoylation or O-decanoylation is essential for ghrelin activity. The O-decanoylated forms Ghrelin-27-C10 and Ghrelin-28-C10 differ in the length of the carbon backbone of the carboxylic acid bound to Ser-26. A small fraction of ghrelin, ghrelin-27-C10:1, ghrelin-27-C10:2, ghrelin-28-C8:1, ghrelin-28-C10:1, and ghrelin-28-C10:2, may be modified with singly or doubly unsaturated carboxylic acids. In terms of processing, amidation of Leu-98 is essential for obestatin activity.

It localises to the secreted. Its function is as follows. Ghrelin is the ligand for growth hormone secretagogue receptor type 1 (GHSR). Induces the release of growth hormone from the pituitary. Has an appetite-stimulating effect, induces adiposity and stimulates gastric acid secretion. Involved in growth regulation. In terms of biological role, obestatin may be the ligand for GPR39. May have an appetite-reducing effect resulting in decreased food intake. May reduce gastric emptying activity and jejunal motility. The chain is Appetite-regulating hormone (GHRL) from Felis catus (Cat).